Here is a 148-residue protein sequence, read N- to C-terminus: Large ribosomal subunit protein uL13 (148 aa).

Belongs to the universal ribosomal protein uL13 family. In terms of assembly, part of the 50S ribosomal subunit.

In terms of biological role, this protein is one of the early assembly proteins of the 50S ribosomal subunit, although it is not seen to bind rRNA by itself. It is important during the early stages of 50S assembly. The protein is Large ribosomal subunit protein uL13 of Sulfolobus acidocaldarius (strain ATCC 33909 / DSM 639 / JCM 8929 / NBRC 15157 / NCIMB 11770).